Here is a 70-residue protein sequence, read N- to C-terminus: uncharacterized protein (70 aa).

This is an uncharacterized protein from Torque teno tamarin virus (isolate So-TTV2).